The following is a 231-amino-acid chain: Phosphoglycolate phosphatase (231 aa).

The active-site Nucleophile is the aspartate 9. 2 residues coordinate Mg(2+): aspartate 9 and aspartate 11. Aspartate 11 (proton donor) is an active-site residue. A substrate-binding site is contributed by lysine 154. Positions 177 and 181 each coordinate Mg(2+).

The protein belongs to the archaeal SPP-like hydrolase family. Homodimer. Mg(2+) is required as a cofactor.

It catalyses the reaction 2-phosphoglycolate + H2O = glycolate + phosphate. Functionally, catalyzes the dephosphorylation of 2-phosphoglycolate. Has phosphatase activity towards p-nitrophenylphosphate (in vitro). In Pyrococcus horikoshii (strain ATCC 700860 / DSM 12428 / JCM 9974 / NBRC 100139 / OT-3), this protein is Phosphoglycolate phosphatase.